The sequence spans 262 residues: MLIIPAVDLRGGRCVRLFQGRADQETVYSTDPVAVARTWEEQGARRLHVVDLDGAFTGKPQNSGVVLDIVKSVNIPVQVGGGIRNPENVKCYLEHGVDRVILGTAALTNPEFLDAVVAAYGERIVVGVDCRDGRVCVQGWEQTAATDVLPFLEELVRRGVRRVVFTDVKRDGTLEGPNLEEIARVAAHTELKVIASGGVSRLEDLRALKKLEHLGVDSVIIGKALYAGTITLAEALALERKEKDNVGQEDHSLPRCEPGPRG.

Aspartate 8 acts as the Proton acceptor in catalysis. Aspartate 129 functions as the Proton donor in the catalytic mechanism. The segment at 243–262 (KDNVGQEDHSLPRCEPGPRG) is disordered.

The protein belongs to the HisA/HisF family.

It is found in the cytoplasm. The catalysed reaction is 1-(5-phospho-beta-D-ribosyl)-5-[(5-phospho-beta-D-ribosylamino)methylideneamino]imidazole-4-carboxamide = 5-[(5-phospho-1-deoxy-D-ribulos-1-ylimino)methylamino]-1-(5-phospho-beta-D-ribosyl)imidazole-4-carboxamide. It functions in the pathway amino-acid biosynthesis; L-histidine biosynthesis; L-histidine from 5-phospho-alpha-D-ribose 1-diphosphate: step 4/9. The polypeptide is 1-(5-phosphoribosyl)-5-[(5-phosphoribosylamino)methylideneamino] imidazole-4-carboxamide isomerase (Desulforudis audaxviator (strain MP104C)).